The sequence spans 467 residues: FAD-dependent oxidoreductase dbaF (467 aa).

An N-terminal signal peptide occupies residues Met1–Ala20. 5 N-linked (GlcNAc...) asparagine glycosylation sites follow: Asn96, Asn134, Asn337, Asn391, and Asn451.

This sequence belongs to the beta-cyclopiazonate dehydrogenase family. The cofactor is FAD.

The protein operates within secondary metabolite biosynthesis. FAD-dependent oxidoreductase; part of the gene cluster that mediates the biosynthesis of the antibiotic 2,4-dihydroxy-3-methyl-6-(2-oxopropyl)benzaldehyde (DHMBA) and its derivatives. The direct non-reducing polyketide synthase dbaI product is 2,4-dihydroxy-3-methyl-6-(2-oxopropyl)benzaldehyde (DHMBA), produced by condensation of one acetyl-CoA starter unit with 4 malonyl-CoA units and one methylation step. The FAD-dependent monooxygenase dbaH is responsible for the synthesis of yellow pigments derived from the oxidation of DHMBA. The roles of dbaB, C, E and F have still to be determined. The chain is FAD-dependent oxidoreductase dbaF from Emericella nidulans (strain FGSC A4 / ATCC 38163 / CBS 112.46 / NRRL 194 / M139) (Aspergillus nidulans).